The chain runs to 209 residues: APC/C-CDH1 modulator 1 (209 aa).

Positions 1-38 (MISPSKKRTILSSKNINQKPRAVVKGNELRSPSKRRSQ) are disordered. Ser-48 carries the phosphoserine modification. The residue at position 161 (Thr-161) is a Phosphothreonine. Phosphoserine is present on Ser-202.

As to quaternary structure, interacts with CDH1, BMH1 and BMH2.

Its function is as follows. Negative regulator of GDH1, the activator protein that regulates the ubiquitin ligase activity and substrate specificity of the anaphase promoting complex/cyclosome (APC/C), and which is required for exit from mitosis, cytokinesis and formation of prereplicative complexes in G1. The protein is APC/C-CDH1 modulator 1 (ACM1) of Saccharomyces cerevisiae (strain ATCC 204508 / S288c) (Baker's yeast).